The primary structure comprises 138 residues: Basic leucine zipper 8 (138 aa).

Positions 30–67 (NLPATSDDSSRTAEDNERKRRRKVSNRESARRSRMRKQ) are disordered. Positions 37–47 (DSSRTAEDNER) are enriched in basic and acidic residues. One can recognise a bZIP domain in the interval 45–108 (NERKRRRKVS…EKVIEENMKL (64 aa)). Residues 47–68 (RKRRRKVSNRESARRSRMRKQR) are basic motif. A Nuclear localization signal motif is present at residues 48-55 (KRRRKVSN). The leucine-zipper stretch occupies residues 73–87 (LWSMLVQLINKNKSL).

The protein belongs to the bZIP family. As to quaternary structure, homodimer.

The protein resides in the nucleus. The protein is Basic leucine zipper 8 of Arabidopsis thaliana (Mouse-ear cress).